The following is a 331-amino-acid chain: Protoheme IX farnesyltransferase (331 aa).

Helical transmembrane passes span 22–42 (LVKP…MWMA), 50–70 (FGVT…INMV), 100–120 (FAGI…NLLA), 147–167 (IVIG…AATG), 174–194 (WVMF…LAIL), 220–240 (ILLY…PLHV), 241–261 (LGSF…WKAV), 273–293 (ATSL…AMGL), and 307–327 (LASL…LGAM).

The protein belongs to the UbiA prenyltransferase family. Protoheme IX farnesyltransferase subfamily.

Its subcellular location is the cell inner membrane. The catalysed reaction is heme b + (2E,6E)-farnesyl diphosphate + H2O = Fe(II)-heme o + diphosphate. The protein operates within porphyrin-containing compound metabolism; heme O biosynthesis; heme O from protoheme: step 1/1. In terms of biological role, converts heme B (protoheme IX) to heme O by substitution of the vinyl group on carbon 2 of heme B porphyrin ring with a hydroxyethyl farnesyl side group. The chain is Protoheme IX farnesyltransferase from Synechococcus sp. (strain JA-3-3Ab) (Cyanobacteria bacterium Yellowstone A-Prime).